Reading from the N-terminus, the 103-residue chain is Large ribosomal subunit protein uL24 (103 aa).

It belongs to the universal ribosomal protein uL24 family. In terms of assembly, part of the 50S ribosomal subunit.

Functionally, one of two assembly initiator proteins, it binds directly to the 5'-end of the 23S rRNA, where it nucleates assembly of the 50S subunit. One of the proteins that surrounds the polypeptide exit tunnel on the outside of the subunit. The chain is Large ribosomal subunit protein uL24 from Treponema pallidum (strain Nichols).